Consider the following 261-residue polypeptide: U1 small nuclear ribonucleoprotein 70 kDa homolog (261 aa).

The RRM domain maps to 100–178; the sequence is KTMFLSRLSY…RRIVVDVERG (79 aa). The tract at residues 192–261 is disordered; it reads GLGGRHYTKE…DSSPKRRRYN (70 aa). The span at 198-215 shows a compositional bias: basic and acidic residues; the sequence is YTKERPRRERGSRFRGDS. The span at 216–235 shows a compositional bias: gly residues; the sequence is GFRGGYRGGFRKSSGGGSRF.

As to quaternary structure, component of the spliceosome, where it is associated with snRNP U1. Associates with U1 snRNA.

It is found in the nucleus. Functionally, involved in nuclear mRNA splicing. Essential for growth. This is U1 small nuclear ribonucleoprotein 70 kDa homolog from Schizosaccharomyces pombe (strain 972 / ATCC 24843) (Fission yeast).